Consider the following 954-residue polypeptide: Protein translocase subunit SecA (954 aa).

Residues Gln-86, 104 to 108 (GEGKT), and Asp-494 contribute to the ATP site. The tract at residues 520–549 (LDPDNPLGSASTTSRGGGQGFGPASPKPKK) is disordered.

This sequence belongs to the SecA family. Monomer and homodimer. Part of the essential Sec protein translocation apparatus which comprises SecA, SecYEG and auxiliary proteins SecDF. Other proteins may also be involved.

Its subcellular location is the cell inner membrane. The protein resides in the cellular thylakoid membrane. It localises to the cytoplasm. It carries out the reaction ATP + H2O + cellular proteinSide 1 = ADP + phosphate + cellular proteinSide 2.. Functionally, part of the Sec protein translocase complex. Interacts with the SecYEG preprotein conducting channel. Has a central role in coupling the hydrolysis of ATP to the transfer of proteins into and across the cell membrane, serving as an ATP-driven molecular motor driving the stepwise translocation of polypeptide chains across the membrane. In terms of biological role, probably participates in protein translocation into and across both the cytoplasmic and thylakoid membranes in cyanobacterial cells. The protein is Protein translocase subunit SecA of Synechococcus sp. (strain JA-3-3Ab) (Cyanobacteria bacterium Yellowstone A-Prime).